The following is a 522-amino-acid chain: GMP synthase [glutamine-hydrolyzing] (522 aa).

In terms of domain architecture, Glutamine amidotransferase type-1 spans 5–204 (YILIIDFGSQ…VKNICNYTNV (200 aa)). Cysteine 82 acts as the Nucleophile in catalysis. Catalysis depends on residues histidine 178 and glutamate 180. One can recognise a GMPS ATP-PPase domain in the interval 205–397 (IKYSLSIRKI…IGIPKEIIFR (193 aa)). ATP is bound at residue 232-238 (SGGIDSF).

As to quaternary structure, homodimer.

It catalyses the reaction XMP + L-glutamine + ATP + H2O = GMP + L-glutamate + AMP + diphosphate + 2 H(+). It participates in purine metabolism; GMP biosynthesis; GMP from XMP (L-Gln route): step 1/1. In terms of biological role, catalyzes the synthesis of GMP from XMP. The sequence is that of GMP synthase [glutamine-hydrolyzing] from Wigglesworthia glossinidia brevipalpis.